Here is a 489-residue protein sequence, read N- to C-terminus: Probable 26S proteasome non-ATPase regulatory subunit 3 (489 aa).

The segment at 1–23 is disordered; the sequence is MTQDVEMKEVPAPAPSNSVTAAT. Residues 241–422 form the PCI domain; sequence CRYLFYLGKI…GWMVSKETGD (182 aa). Residues 454 to 489 form a disordered region; the sequence is PANSHKDKESAEKRRERQQQEQELAKHIAEEDDDEF. Positions 457–482 are enriched in basic and acidic residues; the sequence is SHKDKESAEKRRERQQQEQELAKHIA.

It belongs to the proteasome subunit S3 family. As to quaternary structure, the 26S proteasome is composed of a core protease, known as the 20S proteasome, capped at one or both ends by the 19S regulatory complex (RC). The RC is composed of at least 18 different subunits in two subcomplexes, the base and the lid, which form the portions proximal and distal to the 20S proteolytic core, respectively.

Its subcellular location is the nucleus. Its function is as follows. Acts as a regulatory subunit of the 26 proteasome which is involved in the ATP-dependent degradation of ubiquitinated proteins. The chain is Probable 26S proteasome non-ATPase regulatory subunit 3 (21D7) from Daucus carota (Wild carrot).